The sequence spans 469 residues: Bifunctional protein GlmU (469 aa).

Positions 1–237 (MTTNRKFAIA…SHEVLGVNTR (237 aa)) are pyrophosphorylase. UDP-N-acetyl-alpha-D-glucosamine contacts are provided by residues 12-15 (LAAG), Lys-26, Gln-78, 83-84 (GT), 105-107 (SGD), Gly-144, Glu-162, Asn-177, and Asn-235. Asp-107 is a binding site for Mg(2+). Asn-235 contacts Mg(2+). Residues 238 to 258 (QDLASLDAHLRLQKCQQLMSA) form a linker region. The N-acetyltransferase stretch occupies residues 259–469 (GVSIFKPETC…KKRAEQKKKK (211 aa)). UDP-N-acetyl-alpha-D-glucosamine is bound by residues Arg-341 and Lys-359. His-371 serves as the catalytic Proton acceptor. 2 residues coordinate UDP-N-acetyl-alpha-D-glucosamine: Tyr-374 and Asn-385. Residues Ala-388, 394–395 (NY), Ser-413, Ala-431, and Arg-448 contribute to the acetyl-CoA site.

The protein in the N-terminal section; belongs to the N-acetylglucosamine-1-phosphate uridyltransferase family. In the C-terminal section; belongs to the transferase hexapeptide repeat family. Homotrimer. The cofactor is Mg(2+).

Its subcellular location is the cytoplasm. It catalyses the reaction alpha-D-glucosamine 1-phosphate + acetyl-CoA = N-acetyl-alpha-D-glucosamine 1-phosphate + CoA + H(+). It carries out the reaction N-acetyl-alpha-D-glucosamine 1-phosphate + UTP + H(+) = UDP-N-acetyl-alpha-D-glucosamine + diphosphate. Its pathway is nucleotide-sugar biosynthesis; UDP-N-acetyl-alpha-D-glucosamine biosynthesis; N-acetyl-alpha-D-glucosamine 1-phosphate from alpha-D-glucosamine 6-phosphate (route II): step 2/2. The protein operates within nucleotide-sugar biosynthesis; UDP-N-acetyl-alpha-D-glucosamine biosynthesis; UDP-N-acetyl-alpha-D-glucosamine from N-acetyl-alpha-D-glucosamine 1-phosphate: step 1/1. It functions in the pathway bacterial outer membrane biogenesis; LPS lipid A biosynthesis. Functionally, catalyzes the last two sequential reactions in the de novo biosynthetic pathway for UDP-N-acetylglucosamine (UDP-GlcNAc). The C-terminal domain catalyzes the transfer of acetyl group from acetyl coenzyme A to glucosamine-1-phosphate (GlcN-1-P) to produce N-acetylglucosamine-1-phosphate (GlcNAc-1-P), which is converted into UDP-GlcNAc by the transfer of uridine 5-monophosphate (from uridine 5-triphosphate), a reaction catalyzed by the N-terminal domain. This is Bifunctional protein GlmU from Koribacter versatilis (strain Ellin345).